The sequence spans 105 residues: UPF0060 membrane protein Rmet_4032 (105 aa).

4 consecutive transmembrane segments (helical) span residues 4 to 24, 28 to 48, 60 to 80, and 82 to 102; these read VGLY…PYLW, GASP…AWLL, AAYG…VDGV, and PSPW…IIVF.

Belongs to the UPF0060 family.

It is found in the cell inner membrane. The chain is UPF0060 membrane protein Rmet_4032 from Cupriavidus metallidurans (strain ATCC 43123 / DSM 2839 / NBRC 102507 / CH34) (Ralstonia metallidurans).